The chain runs to 217 residues: Peptide methionine sulfoxide reductase MsrA (217 aa).

C56 is a catalytic residue.

This sequence belongs to the MsrA Met sulfoxide reductase family.

It catalyses the reaction L-methionyl-[protein] + [thioredoxin]-disulfide + H2O = L-methionyl-(S)-S-oxide-[protein] + [thioredoxin]-dithiol. The catalysed reaction is [thioredoxin]-disulfide + L-methionine + H2O = L-methionine (S)-S-oxide + [thioredoxin]-dithiol. Functionally, has an important function as a repair enzyme for proteins that have been inactivated by oxidation. Catalyzes the reversible oxidation-reduction of methionine sulfoxide in proteins to methionine. The sequence is that of Peptide methionine sulfoxide reductase MsrA from Rippkaea orientalis (strain PCC 8801 / RF-1) (Cyanothece sp. (strain PCC 8801)).